A 190-amino-acid polypeptide reads, in one-letter code: Elongation factor P-like protein (190 aa).

It belongs to the elongation factor P family.

In Klebsiella pneumoniae subsp. pneumoniae (strain ATCC 700721 / MGH 78578), this protein is Elongation factor P-like protein.